Reading from the N-terminus, the 1355-residue chain is Ecdysone-induced protein 75B, isoform A (1355 aa).

Disordered stretches follow at residues 60 to 91 (QHQP…QQHS), 126 to 228 (RLKN…DSSY), 248 to 268 (ELEQ…EAKP), and 308 to 344 (ATQQ…NSSA). Residues 66–76 (QLHHQHQHQHQ) show a composition bias toward basic residues. Low complexity-rich tracts occupy residues 77–91 (HQQQ…QQHS) and 143–179 (TLVK…QHQQ). A compositionally biased stretch (acidic residues) spans 200 to 213 (SGIDEDSPNSDEDC). Composition is skewed to polar residues over residues 218 to 228 (PAGTSLEDSSY) and 254 to 264 (TTGGSNAQQQV). Composition is skewed to low complexity over residues 308 to 321 (ATQQ…QHQH) and 330 to 344 (DSNC…NSSA). The nuclear receptor DNA-binding region spans 384–474 (SQLNYLCQKF…VGMSRDAVRF (91 aa)). The segment at 387–421 (NYLCQKFDEKLDTALSNSSANTGRNTPAVTANEDA) adopts an NR C4-type; degenerate zinc-finger fold. Residues 438–457 (CTKNQQCSILRINRNRCQYC) form an NR C4-type zinc finger. One can recognise an NR LBD domain in the interval 508–756 (DQPRLLAAVL…QQMWSMEDGN (249 aa)). Disordered regions lie at residues 780–821 (KSPL…SALA), 927–964 (LDSP…SVDD), 987–1007 (VSVS…KRQI), 1051–1117 (AEAD…SSHS), 1147–1260 (ENST…SNSA), and 1312–1344 (TVTA…NPGL). 5 stretches are compositionally biased toward low complexity: residues 797-809 (GSPS…GVSL), 948-960 (SSGG…SPRS), 987-1001 (VSVS…STSS), 1053-1098 (ADAS…AQSQ), and 1106-1117 (SSPKASMASSHS). Polar residues-rich tracts occupy residues 1149–1162 (STAA…VGNR) and 1174–1196 (AVQN…QRQQ). Low complexity-rich tracts occupy residues 1197-1233 (SVSP…SASS), 1242-1260 (STSN…SNSA), and 1315-1343 (ASNG…PNPG).

It belongs to the nuclear hormone receptor family. NR1 subfamily.

The protein localises to the nucleus. Its function is as follows. Implicated in the regulation of ecdysone-triggered gene hierarchies. Probably plays a key role in mediating the regulation of the larval molt by 20-OH-ecdysone. This chain is Ecdysone-induced protein 75B, isoform A (Eip75B), found in Drosophila melanogaster (Fruit fly).